A 476-amino-acid chain; its full sequence is WD repeat, SAM and U-box domain-containing protein 1 (476 aa).

WD repeat units follow at residues 10–47, 52–91, 95–134, 137–176, 178–227, 237–276, and 279–318; these read DHSD…ELPY, GHTY…MLAV, PTGS…FYRS, VKDG…LCNE, AHDL…FLGG, GHSA…ILHT, and QHTR…PCAG. The SAM domain occupies 333–396; sequence WSEDDVSAWL…LQKIEELRMK (64 aa). Positions 403 to 476 constitute a U-box domain; the sequence is AVPDEFLCPI…ISRWLETQQK (74 aa).

This is WD repeat, SAM and U-box domain-containing protein 1 (WDSUB1) from Gallus gallus (Chicken).